Consider the following 244-residue polypeptide: MWLGDYSLLNLLGIFLQATFIQNILLSTFLGMCSYLACSSRLSTANGLGMSVALVLTITGSINWLVHYFITKPGALAWLSPALANIDLSFLELIMFIVVIAAFTQILELLLERFSRNLYLALGIFLPLIAVNCAILGGVLFGITRNYPFLPMVVFSLGSGCGWWLAIVLFATIREKLAYSDVPQHLRGTGISFITTGLMAMAFMGLTGIDISKPTTSKPAFVMNIATDSPQPNTHSSSEEPKAS.

6 helical membrane passes run 11–31, 50–70, 90–110, 123–143, 153–173, and 191–211; these read LLGI…TFLG, MSVA…HYFI, FLEL…LELL, GIFL…LFGI, VVFS…FATI, and ISFI…GIDI.

This sequence belongs to the NqrDE/RnfAE family. Composed of six subunits; NqrA, NqrB, NqrC, NqrD, NqrE and NqrF.

It localises to the cell inner membrane. The enzyme catalyses a ubiquinone + n Na(+)(in) + NADH + H(+) = a ubiquinol + n Na(+)(out) + NAD(+). Functionally, NQR complex catalyzes the reduction of ubiquinone-1 to ubiquinol by two successive reactions, coupled with the transport of Na(+) ions from the cytoplasm to the periplasm. NqrA to NqrE are probably involved in the second step, the conversion of ubisemiquinone to ubiquinol. This Chlamydia trachomatis serovar L2 (strain ATCC VR-902B / DSM 19102 / 434/Bu) protein is Na(+)-translocating NADH-quinone reductase subunit E.